A 143-amino-acid polypeptide reads, in one-letter code: Transcriptional regulator MraZ (143 aa).

SpoVT-AbrB domains are found at residues 5 to 47 (THSP…SQKE) and 76 to 119 (ASDE…DADA).

The protein belongs to the MraZ family. In terms of assembly, forms oligomers.

The protein resides in the cytoplasm. It localises to the nucleoid. In Paenarthrobacter aurescens (strain TC1), this protein is Transcriptional regulator MraZ.